The chain runs to 271 residues: Collectin-11 (271 aa).

Positions 1 to 25 (MVGEKLVAYMLVSVLGLALLRSVFG) are cleaved as a signal peptide. The Collagen-like domain maps to 44–103 (GEAGEKGEKGAPGRPGRVGPTGEQGPPGDKGQKGSPGRYGKMGPTGPKGLKGDMGDPGPK). Residues 46–112 (AGEKGEKGAP…KGPNGEPGVP (67 aa)) are disordered. Residues 124 to 148 (EMDIQVVQLTNELKFIKNAVAGIKE) are a coiled coil. In terms of domain architecture, C-type lectin spans 149 to 265 (TDSKVYLLVK…CQLTMYFVCE (117 aa)). 2 disulfides stabilise this stretch: Cys170–Cys264 and Cys242–Cys256. A carbohydrate is bound at residue Arg200. Asp207, Glu211, Glu232, Asn234, Asn235, Asp238, Glu240, and Asp241 together coordinate Ca(2+). A carbohydrate is bound at residue Glu240. Residues Glu244 and 252–254 (IDV) contribute to the a carbohydrate site. Asp253 contacts Ca(2+).

Belongs to the COLEC10/COLEC11 family. In terms of assembly, homotrimer; disulfide-linked. Interacts with MASP1; probably triggers the lectin pathway of complement.

The protein localises to the secreted. Its function is as follows. Lectin that plays a role in innate immunity, apoptosis and embryogenesis. Calcium-dependent lectin that binds self and non-self glycoproteins presenting high mannose oligosaccharides with at least one terminal alpha-1,2-linked mannose epitope. Primarily recognizes the terminal disaccharide of the glycan. Also recognizes a subset of fucosylated glycans and lipopolysaccharides. Plays a role in innate immunity through its ability to bind non-self sugars presented by microorganisms and to activate the complement through the recruitment of MAPS1. Also plays a role in apoptosis through its ability to bind in a calcium-independent manner the DNA present at the surface of apoptotic cells and to activate the complement in response to this binding. Finally, plays a role in development, probably serving as a guidance cue during the migration of neural crest cells and other cell types during embryogenesis. This Danio rerio (Zebrafish) protein is Collectin-11 (colec11).